The chain runs to 508 residues: MLAASLRVEAVAVVAAAVLVLLLSPAAVVVVAGQHDYGDALHKSILFFEGQRSGRLPPDQRLRWRRDSGLHDGAAASVDLTGGYYDAGDNVKFGFPMAFTATLMSWGLIDFGRSFGPHKEEARKAVRWATDYLMKATAKPNTVYVQVGDAFRDHSCWERPEDMDTPRTVYKVDPSHPGSDVAAETAAALAAGSIVFRDADPAYSKRLLDRAIAVFEFADKYRGPYSSSLHDAVCPCYCDFSGYKDELLWGAAWLHKASRRREYREYIKKNEVVLGASESINEFGWDNKHAGINVLISKEVLMGKDEYFQSFRVNADNFMCSLLPGISNHPQIQYSPGGLLFKVGGSNMQHVTSLSFLLLAYSNYLSHAGARVSCGAGGSASPTQLRRVAKRQVDYILGDNPLRMSYMVGYGARFPRRIHHRGSSLPSVAAHPARIGCKGGAAYYASAAPNPNLLVGAVVGGPSDATDAFPDARAVFQQSEPTTYINAPLMGLLAYFSAHPNPAEWADD.

The first 33 residues, 1–33 (MLAASLRVEAVAVVAAAVLVLLLSPAAVVVVAG), serve as a signal peptide directing secretion. Asp89 functions as the Nucleophile in the catalytic mechanism. Active-site residues include His419, Asp471, and Glu480.

Belongs to the glycosyl hydrolase 9 (cellulase E) family.

Its subcellular location is the secreted. It carries out the reaction Endohydrolysis of (1-&gt;4)-beta-D-glucosidic linkages in cellulose, lichenin and cereal beta-D-glucans.. The chain is Endoglucanase 6 from Oryza sativa subsp. japonica (Rice).